We begin with the raw amino-acid sequence, 164 residues long: Phosphopantetheine adenylyltransferase (164 aa).

Residue T14 coordinates substrate. ATP is bound by residues 14 to 15 and H22; that span reads TF. Substrate contacts are provided by K46, L78, and R92. Residues 93–95, E103, and 128–134 contribute to the ATP site; these read GLR and HAFISST.

Belongs to the bacterial CoaD family. Homohexamer. Requires Mg(2+) as cofactor.

It is found in the cytoplasm. It carries out the reaction (R)-4'-phosphopantetheine + ATP + H(+) = 3'-dephospho-CoA + diphosphate. It participates in cofactor biosynthesis; coenzyme A biosynthesis; CoA from (R)-pantothenate: step 4/5. In terms of biological role, reversibly transfers an adenylyl group from ATP to 4'-phosphopantetheine, yielding dephospho-CoA (dPCoA) and pyrophosphate. The polypeptide is Phosphopantetheine adenylyltransferase (Vibrio cholerae serotype O1 (strain ATCC 39541 / Classical Ogawa 395 / O395)).